The sequence spans 556 residues: Myb/SANT-like DNA-binding domain-containing protein 2 (556 aa).

Composition is skewed to polar residues over residues 1–10 and 36–45; these read MAASCGSSQL and GNPSLSDPST. Residues 1–82 form a disordered region; it reads MAASCGSSQL…GGASPSVSFS (82 aa). Residues 56 to 74 show a composition bias toward gly residues; that stretch reads PAAGGAGLGGGGAAGGRGG. Positions 99-169 constitute a Myb-like domain; it reads SWTPAETNAL…QCRERIKTLR (71 aa). A disordered region spans residues 431–458; it reads PRSPLAEPRGADPSNETPGELEVPSPQA.

This Gallus gallus (Chicken) protein is Myb/SANT-like DNA-binding domain-containing protein 2 (MSANTD2).